The chain runs to 315 residues: tRNA pseudouridine synthase B (315 aa).

Aspartate 54 acts as the Nucleophile in catalysis.

Belongs to the pseudouridine synthase TruB family. Type 1 subfamily.

The enzyme catalyses uridine(55) in tRNA = pseudouridine(55) in tRNA. Responsible for synthesis of pseudouridine from uracil-55 in the psi GC loop of transfer RNAs. The protein is tRNA pseudouridine synthase B of Agrobacterium fabrum (strain C58 / ATCC 33970) (Agrobacterium tumefaciens (strain C58)).